The sequence spans 111 residues: BET1-like protein (111 aa).

The Cytoplasmic segment spans residues 1–86 (MADWTRAQSS…MARSGRDNRK (86 aa)). 2 positions are modified to phosphoserine: serine 9 and serine 37. The t-SNARE coiled-coil homology domain occupies 15–77 (DILDRENKRM…TGSVKRFSTM (63 aa)). A helical; Anchor for type IV membrane protein transmembrane segment spans residues 87–107 (LLCGMAVVLIVAFFILSYLLS). The Lumenal portion of the chain corresponds to 108-111 (RTRT).

In terms of assembly, component of a SNARE complex consisting of STX5, YKT6, GOSR1 and BET1L. Interacts with STX5.

It is found in the golgi apparatus membrane. The protein localises to the golgi apparatus. Its subcellular location is the trans-Golgi network membrane. In terms of biological role, vesicle SNARE required for targeting and fusion of retrograde transport vesicles with the Golgi complex. Required for the integrity of the Golgi complex. The chain is BET1-like protein from Mus musculus (Mouse).